The primary structure comprises 705 residues: Elongation factor G (705 aa).

Positions Asn-6–Leu-282 constitute a tr-type G domain. Residues Ala-15–Thr-22, Asp-79–His-83, and Asn-133–Asp-136 contribute to the GTP site.

It belongs to the TRAFAC class translation factor GTPase superfamily. Classic translation factor GTPase family. EF-G/EF-2 subfamily.

It localises to the cytoplasm. Its function is as follows. Catalyzes the GTP-dependent ribosomal translocation step during translation elongation. During this step, the ribosome changes from the pre-translocational (PRE) to the post-translocational (POST) state as the newly formed A-site-bound peptidyl-tRNA and P-site-bound deacylated tRNA move to the P and E sites, respectively. Catalyzes the coordinated movement of the two tRNA molecules, the mRNA and conformational changes in the ribosome. This chain is Elongation factor G, found in Corynebacterium glutamicum (strain ATCC 13032 / DSM 20300 / JCM 1318 / BCRC 11384 / CCUG 27702 / LMG 3730 / NBRC 12168 / NCIMB 10025 / NRRL B-2784 / 534).